A 198-amino-acid chain; its full sequence is uncharacterized protein (198 aa).

It to A.aeolicus aq_1211 and aq_1583.

This is an uncharacterized protein from Aquifex aeolicus (strain VF5).